Here is a 347-residue protein sequence, read N- to C-terminus: Melatonin receptor type 1B-B (347 aa).

The Extracellular portion of the chain corresponds to 1 to 36 (MPENIAFLTNSTDLGHVGRALGSSARPAWAIAVLAS). Residue Asn-10 is glycosylated (N-linked (GlcNAc...) asparagine). A helical transmembrane segment spans residues 37-57 (VLIFTTVVDVLGNLLVIISVF). The Cytoplasmic portion of the chain corresponds to 58–72 (RNRKLRNAGNVFVVS). A helical transmembrane segment spans residues 73-93 (LAFADLVVAFYPYPLVLYAIF). Topologically, residues 94–105 (HDGWSLGETQCK) are extracellular. A disulfide bridge links Cys-104 with Cys-181. Residues 106–126 (ISGFLMGLSVIGSVFNITGIA) form a helical membrane-spanning segment. The Cytoplasmic portion of the chain corresponds to 127–148 (INRYCYICHSFAYGRLYSFRNT). The chain crosses the membrane as a helical span at residues 149-169 (LLLVALIWALTVLAILPNFFV). The Extracellular segment spans residues 170 to 191 (GSLSYDPRVYSCTFTQTASSSY). A helical transmembrane segment spans residues 192 to 212 (TVVVVVVHFLVPIAVVTFCYL). Residues 213–244 (RIWVLVIQVRRKVKSEERSRVRPSDLRNFVTM) are Cytoplasmic-facing. Residues 245–265 (FVVFVLFAICWAPLNLIGLVV) form a helical membrane-spanning segment. Residues 266–278 (AINPEVMAPRVPE) lie on the Extracellular side of the membrane. The helical transmembrane segment at 279–299 (WLFVVSYFMAYFNSCLNAIIY) threads the bilayer. The Cytoplasmic portion of the chain corresponds to 300–347 (GLLNRNFRKEYVRIMTAVWIPRRFVTETSRAATDGMRSKPSPAINNNE).

It belongs to the G-protein coupled receptor 1 family.

It localises to the cell membrane. In terms of biological role, high affinity receptor for melatonin. The activity of this receptor is mediated by pertussis toxin sensitive G proteins that inhibits adenylate cyclase activity. The protein is Melatonin receptor type 1B-B (mtnr1bb) of Danio rerio (Zebrafish).